The sequence spans 346 residues: MKIELLNTPADALEIRYEEQIRPLKMDDFTGQQRLTDNLRVFISAAKIRGDALDHVLLSGPPGLGKTTLANIIASEMGGNIKVTSGPMLDKAGNLAGLLTSLRKGDVLFIDEIHRLPAAVEEYLYSAMEDFRIDIMLDSGPSARAVQLRIEPFTLVGATTRSGLLTSPLRARFGISSRFDYYPPELLERIILRASGILGIGVTTEAAGEIAGRSRGTPRIANRLLRRARDFAQVADSFVINHDIAMTTLASLEIDEEGLDDMDKKIMDTIVNKFNGGPVGVASLAVSVGEEQDTIEEVYEPYLIQAGYLARTPRGRVATRLALKRFSSGSGINSSEGPLFDAAPAR.

The tract at residues 1–182 (MKIELLNTPA…FGISSRFDYY (182 aa)) is large ATPase domain (RuvB-L). ATP-binding positions include I21, R22, G63, K66, T67, T68, 129–131 (EDF), R172, Y182, and R219. T67 serves as a coordination point for Mg(2+). The interval 183–253 (PPELLERIIL…IAMTTLASLE (71 aa)) is small ATPAse domain (RuvB-S). Residues 256-346 (EEGLDDMDKK…GPLFDAAPAR (91 aa)) are head domain (RuvB-H). R311 and R316 together coordinate DNA.

Belongs to the RuvB family. As to quaternary structure, homohexamer. Forms an RuvA(8)-RuvB(12)-Holliday junction (HJ) complex. HJ DNA is sandwiched between 2 RuvA tetramers; dsDNA enters through RuvA and exits via RuvB. An RuvB hexamer assembles on each DNA strand where it exits the tetramer. Each RuvB hexamer is contacted by two RuvA subunits (via domain III) on 2 adjacent RuvB subunits; this complex drives branch migration. In the full resolvosome a probable DNA-RuvA(4)-RuvB(12)-RuvC(2) complex forms which resolves the HJ.

It localises to the cytoplasm. It carries out the reaction ATP + H2O = ADP + phosphate + H(+). Functionally, the RuvA-RuvB-RuvC complex processes Holliday junction (HJ) DNA during genetic recombination and DNA repair, while the RuvA-RuvB complex plays an important role in the rescue of blocked DNA replication forks via replication fork reversal (RFR). RuvA specifically binds to HJ cruciform DNA, conferring on it an open structure. The RuvB hexamer acts as an ATP-dependent pump, pulling dsDNA into and through the RuvAB complex. RuvB forms 2 homohexamers on either side of HJ DNA bound by 1 or 2 RuvA tetramers; 4 subunits per hexamer contact DNA at a time. Coordinated motions by a converter formed by DNA-disengaged RuvB subunits stimulates ATP hydrolysis and nucleotide exchange. Immobilization of the converter enables RuvB to convert the ATP-contained energy into a lever motion, pulling 2 nucleotides of DNA out of the RuvA tetramer per ATP hydrolyzed, thus driving DNA branch migration. The RuvB motors rotate together with the DNA substrate, which together with the progressing nucleotide cycle form the mechanistic basis for DNA recombination by continuous HJ branch migration. Branch migration allows RuvC to scan DNA until it finds its consensus sequence, where it cleaves and resolves cruciform DNA. In Chlorobium phaeobacteroides (strain DSM 266 / SMG 266 / 2430), this protein is Holliday junction branch migration complex subunit RuvB.